The chain runs to 218 residues: Pyridoxine/pyridoxamine 5'-phosphate oxidase (218 aa).

Residues 14–17 (RREY) and Lys-72 each bind substrate. Residues 67–72 (RIVLLK), 82–83 (YT), Arg-88, Lys-89, and Gln-111 contribute to the FMN site. The substrate site is built by Tyr-129, Arg-133, and Ser-137. FMN is bound by residues 146-147 (QS) and Trp-191. Residue 197-199 (RLH) coordinates substrate. Arg-201 contributes to the FMN binding site.

Belongs to the pyridoxamine 5'-phosphate oxidase family. In terms of assembly, homodimer. FMN serves as cofactor.

The catalysed reaction is pyridoxamine 5'-phosphate + O2 + H2O = pyridoxal 5'-phosphate + H2O2 + NH4(+). It carries out the reaction pyridoxine 5'-phosphate + O2 = pyridoxal 5'-phosphate + H2O2. The protein operates within cofactor metabolism; pyridoxal 5'-phosphate salvage; pyridoxal 5'-phosphate from pyridoxamine 5'-phosphate: step 1/1. Its pathway is cofactor metabolism; pyridoxal 5'-phosphate salvage; pyridoxal 5'-phosphate from pyridoxine 5'-phosphate: step 1/1. In terms of biological role, catalyzes the oxidation of either pyridoxine 5'-phosphate (PNP) or pyridoxamine 5'-phosphate (PMP) into pyridoxal 5'-phosphate (PLP). This Escherichia coli O139:H28 (strain E24377A / ETEC) protein is Pyridoxine/pyridoxamine 5'-phosphate oxidase.